The chain runs to 331 residues: Biotin synthase (331 aa).

A Radical SAM core domain is found at 39-264 (SELQTCYLIS…VFPRSMVRLA (226 aa)). [4Fe-4S] cluster-binding residues include Cys-54, Cys-58, and Cys-61. Cys-98, Cys-130, Cys-190, and Arg-262 together coordinate [2Fe-2S] cluster.

Belongs to the radical SAM superfamily. Biotin synthase family. As to quaternary structure, homodimer. It depends on [4Fe-4S] cluster as a cofactor. The cofactor is [2Fe-2S] cluster.

It carries out the reaction (4R,5S)-dethiobiotin + (sulfur carrier)-SH + 2 reduced [2Fe-2S]-[ferredoxin] + 2 S-adenosyl-L-methionine = (sulfur carrier)-H + biotin + 2 5'-deoxyadenosine + 2 L-methionine + 2 oxidized [2Fe-2S]-[ferredoxin]. Its pathway is cofactor biosynthesis; biotin biosynthesis; biotin from 7,8-diaminononanoate: step 2/2. Catalyzes the conversion of dethiobiotin (DTB) to biotin by the insertion of a sulfur atom into dethiobiotin via a radical-based mechanism. In Chlamydia pneumoniae (Chlamydophila pneumoniae), this protein is Biotin synthase.